We begin with the raw amino-acid sequence, 334 residues long: Siroheme decarboxylase (334 aa).

The active site involves H93.

Belongs to the Ahb/Nir family.

The catalysed reaction is siroheme + 2 H(+) = 12,18-didecarboxysiroheme + 2 CO2. It participates in porphyrin-containing compound metabolism. Involved in heme d1 biosynthesis. Catalyzes the decarboxylation of siroheme into didecarboxysiroheme. Siroheme is probably decarboxylated to monodecarboxysiroheme, which is in turn decarboxylated to didecarboxysiroheme. The sequence is that of Siroheme decarboxylase from Hydrogenobacter thermophilus (strain DSM 6534 / IAM 12695 / TK-6).